The primary structure comprises 467 residues: Cytochrome c-552 (467 aa).

The signal sequence occupies residues 1–27 (MVKKLTGKSFALSALVAASFVAAGAMA). H87 lines the heme c pocket. The heme site is built by C115, C118, and K119. 6 residues coordinate heme c: C153, C156, H157, C195, C198, and H199. Residues E201, Y202, K250, and Q252 each coordinate Ca(2+). Residue Y202 participates in substrate binding. A substrate-binding site is contributed by H253. Heme c is bound by residues H264, C271, C274, H275, H290, C303, C306, H307, and H382.

This sequence belongs to the cytochrome c-552 family. The cofactor is Ca(2+). Heme c serves as cofactor.

Its subcellular location is the periplasm. It carries out the reaction 6 Fe(III)-[cytochrome c] + NH4(+) + 2 H2O = 6 Fe(II)-[cytochrome c] + nitrite + 8 H(+). The protein operates within nitrogen metabolism; nitrate reduction (assimilation). Functionally, catalyzes the reduction of nitrite to ammonia, consuming six electrons in the process. In Shewanella amazonensis (strain ATCC BAA-1098 / SB2B), this protein is Cytochrome c-552.